The sequence spans 108 residues: Thiosulfate sulfurtransferase GlpE (108 aa).

Residues 17 to 105 (KDGSAALVDI…WARQYPQDVE (89 aa)) form the Rhodanese domain. Catalysis depends on Cys65, which acts as the Cysteine persulfide intermediate.

It belongs to the GlpE family.

It localises to the cytoplasm. It catalyses the reaction thiosulfate + hydrogen cyanide = thiocyanate + sulfite + 2 H(+). It carries out the reaction thiosulfate + [thioredoxin]-dithiol = [thioredoxin]-disulfide + hydrogen sulfide + sulfite + 2 H(+). In terms of biological role, transferase that catalyzes the transfer of sulfur from thiosulfate to thiophilic acceptors such as cyanide or dithiols. May function in a CysM-independent thiosulfate assimilation pathway by catalyzing the conversion of thiosulfate to sulfite, which can then be used for L-cysteine biosynthesis. In Serratia proteamaculans (strain 568), this protein is Thiosulfate sulfurtransferase GlpE.